The sequence spans 298 residues: MPLSGTPAPNKKRKSSKLIMELTGGGQESSGLNLGKKISVPRDVMLEELSLLTNRGSKMFKLRQMRVEKFIYENHPDVFSDSSMDHFQKFLPTVGGQLGTAGQGFSYSKGSSGGQAGGSSSAGQYGSGQQHHHQGSGSGSGGAGGPGSQTGRGGDAGTTGVGETGTGDQAGGEGKHITVFKTYISPWEKAMGVDPHQKVELGIDLLAYGAKAELPQYKSFNRTAMPYGGYEKASKRMTFQMPKFDLGPLLSEPLVLYNQNLSNRPSFNRTPIPWLSSGEPVDYNVDIGIPLDGETEEL.

Positions 1–34 are disordered; that stretch reads MPLSGTPAPNKKRKSSKLIMELTGGGQESSGLNL. S82 is modified (phosphoserine). The disordered stretch occupies residues 105 to 173; sequence FSYSKGSSGG…TGTGDQAGGE (69 aa). Residues 118–129 are compositionally biased toward low complexity; sequence GSSSAGQYGSGQ. Gly residues predominate over residues 136–172; sequence SGSGSGGAGGPGSQTGRGGDAGTTGVGETGTGDQAGG.

Belongs to the myozenin family. In terms of assembly, interacts with ACTN2, ACTN3, FLNA, FLNB, FLNC, LDB3, PPP3CA and TCAP. Interacts via its C-terminal region with MYOT.

Its subcellular location is the nucleus. It is found in the cell projection. It localises to the pseudopodium. Its function is as follows. Myozenins may serve as intracellular binding proteins involved in linking Z-disk proteins such as alpha-actinin, gamma-filamin, TCAP/telethonin, LDB3/ZASP and localizing calcineurin signaling to the sarcomere. Plays an important role in the modulation of calcineurin signaling. May play a role in myofibrillogenesis. The sequence is that of Myozenin-1 (MYOZ1) from Sus scrofa (Pig).